Here is a 305-residue protein sequence, read N- to C-terminus: Sulfate adenylyltransferase subunit 2 (305 aa).

This sequence belongs to the PAPS reductase family. CysD subfamily. In terms of assembly, heterodimer composed of CysD, the smaller subunit, and CysN.

The enzyme catalyses sulfate + ATP + H(+) = adenosine 5'-phosphosulfate + diphosphate. Its pathway is sulfur metabolism; hydrogen sulfide biosynthesis; sulfite from sulfate: step 1/3. Its function is as follows. With CysN forms the ATP sulfurylase (ATPS) that catalyzes the adenylation of sulfate producing adenosine 5'-phosphosulfate (APS) and diphosphate, the first enzymatic step in sulfur assimilation pathway. APS synthesis involves the formation of a high-energy phosphoric-sulfuric acid anhydride bond driven by GTP hydrolysis by CysN coupled to ATP hydrolysis by CysD. The polypeptide is Sulfate adenylyltransferase subunit 2 (Ectopseudomonas mendocina (strain ymp) (Pseudomonas mendocina)).